We begin with the raw amino-acid sequence, 370 residues long: Pyruvate dehydrogenase E1 component subunit alpha (370 aa).

As to quaternary structure, heterodimer of an alpha and a beta chain. Thiamine diphosphate serves as cofactor.

It catalyses the reaction N(6)-[(R)-lipoyl]-L-lysyl-[protein] + pyruvate + H(+) = N(6)-[(R)-S(8)-acetyldihydrolipoyl]-L-lysyl-[protein] + CO2. Functionally, the pyruvate dehydrogenase complex catalyzes the overall conversion of pyruvate to acetyl-CoA and CO(2). It contains multiple copies of three enzymatic components: pyruvate dehydrogenase (E1), dihydrolipoamide acetyltransferase (E2) and lipoamide dehydrogenase (E3). The chain is Pyruvate dehydrogenase E1 component subunit alpha (pdhA) from Staphylococcus aureus (strain COL).